Consider the following 90-residue polypeptide: DNA-directed RNA polymerase subunit Rpo11 (90 aa).

This sequence belongs to the archaeal Rpo11/eukaryotic RPB11/RPC19 RNA polymerase subunit family. As to quaternary structure, part of the RNA polymerase complex.

Its subcellular location is the cytoplasm. It catalyses the reaction RNA(n) + a ribonucleoside 5'-triphosphate = RNA(n+1) + diphosphate. DNA-dependent RNA polymerase (RNAP) catalyzes the transcription of DNA into RNA using the four ribonucleoside triphosphates as substrates. The protein is DNA-directed RNA polymerase subunit Rpo11 of Metallosphaera sedula (strain ATCC 51363 / DSM 5348 / JCM 9185 / NBRC 15509 / TH2).